Here is a 442-residue protein sequence, read N- to C-terminus: Hydroxycinnamoyltransferase 2 (442 aa).

Catalysis depends on proton acceptor residues histidine 159 and aspartate 389.

The protein belongs to the plant acyltransferase family. As to expression, expressed in roots and leaves. Expressed at low levels in stems and seeds.

Its function is as follows. Hydroxycinnamoyl transferase that catalyzes the transfer of an acyl from p-coumaryol-CoA to various acyl acceptors. Can use feruloyl-CoA and caffeoyl-CoA as acyl donors. The chain is Hydroxycinnamoyltransferase 2 from Oryza sativa subsp. japonica (Rice).